A 187-amino-acid polypeptide reads, in one-letter code: Flavin prenyltransferase UbiX (187 aa).

FMN is bound by residues 9-11 (GSS), Thr34, 88-91 (SISS), and Arg123. The dimethylallyl phosphate site is built by Tyr153 and Lys169.

It belongs to the UbiX/PAD1 family.

It carries out the reaction dimethylallyl phosphate + FMNH2 = prenylated FMNH2 + phosphate. Functionally, flavin prenyltransferase that catalyzes the synthesis of the prenylated FMN cofactor (prenyl-FMN) for 4-hydroxy-3-polyprenylbenzoic acid decarboxylase UbiD. The prenyltransferase is metal-independent and links a dimethylallyl moiety from dimethylallyl monophosphate (DMAP) to the flavin N5 and C6 atoms of FMN. The sequence is that of Flavin prenyltransferase UbiX from Campylobacter jejuni subsp. jejuni serotype O:2 (strain ATCC 700819 / NCTC 11168).